Reading from the N-terminus, the 156-residue chain is Ribonuclease pancreatic (156 aa).

Positions 1–28 are cleaved as a signal peptide; sequence MALEKSLALLPLLVLVLLVLGWVQPSLG. Basic and acidic residues predominate over residues 33–43; the sequence is AKKFQRQHMDS. The disordered stretch occupies residues 33–52; the sequence is AKKFQRQHMDSDGSPSSNPT. Residues lysine 35 and arginine 38 each coordinate substrate. The active-site Proton acceptor is the histidine 40. 4 cysteine pairs are disulfide-bonded: cysteine 54–cysteine 112, cysteine 68–cysteine 123, cysteine 86–cysteine 138, and cysteine 93–cysteine 100. Residue asparagine 62 is glycosylated (N-linked (GlcNAc...) asparagine). Residues 69 to 73, lysine 94, and arginine 113 each bind substrate; that span reads KPVNT. Asparagine 116 carries an N-linked (GlcNAc...) asparagine glycan. Catalysis depends on histidine 147, which acts as the Proton donor.

It belongs to the pancreatic ribonuclease family. In terms of assembly, monomer. Interacts with and forms tight 1:1 complexes with RNH1. Dimerization of two such complexes may occur. Interaction with RNH1 inhibits this protein.

The protein resides in the secreted. It catalyses the reaction an [RNA] containing cytidine + H2O = an [RNA]-3'-cytidine-3'-phosphate + a 5'-hydroxy-ribonucleotide-3'-[RNA].. The catalysed reaction is an [RNA] containing uridine + H2O = an [RNA]-3'-uridine-3'-phosphate + a 5'-hydroxy-ribonucleotide-3'-[RNA].. Its function is as follows. Endonuclease that catalyzes the cleavage of RNA on the 3' side of pyrimidine nucleotides. Acts on single-stranded and double-stranded RNA. The chain is Ribonuclease pancreatic (RNASE1) from Saimiri sciureus (Common squirrel monkey).